Consider the following 158-residue polypeptide: MLNNKLTIHKTKKLYGLVSGNIEDTSIRTKEFIASEFYGYKRKFQIGIQSSYKDNESSNKQLLSTVKSLSLKQSDNAIKRNKIGGSKRSEVHSNRSKNYSSKKFRSQKCRRSRQKKRQNKKPNNSRFISSNKTKRKYYKLDFNKFDINGNPEHYLVLQ.

The tract at residues 77 to 132 is disordered; that stretch reads AIKRNKIGGSKRSEVHSNRSKNYSSKKFRSQKCRRSRQKKRQNKKPNNSRFISSNK. The segment covering 100–120 has biased composition (basic residues); it reads SSKKFRSQKCRRSRQKKRQNK.

This is an uncharacterized protein from Acanthamoeba polyphaga mimivirus (APMV).